A 449-amino-acid chain; its full sequence is tRNA modification GTPase MnmE (449 aa).

Residues Arg24, Glu81, and Lys121 each contribute to the (6S)-5-formyl-5,6,7,8-tetrahydrofolate site. In terms of domain architecture, TrmE-type G spans 218–375 (GLVVAITGPP…LIAALGKFAA (158 aa)). GTP-binding positions include 228–233 (NVGKST), 247–253 (SPHAGTT), and 272–275 (DTAG). Residues Ser232 and Thr253 each contribute to the Mg(2+) site. Lys449 is a (6S)-5-formyl-5,6,7,8-tetrahydrofolate binding site.

It belongs to the TRAFAC class TrmE-Era-EngA-EngB-Septin-like GTPase superfamily. TrmE GTPase family. As to quaternary structure, homodimer. Heterotetramer of two MnmE and two MnmG subunits. It depends on K(+) as a cofactor.

It localises to the cytoplasm. In terms of biological role, exhibits a very high intrinsic GTPase hydrolysis rate. Involved in the addition of a carboxymethylaminomethyl (cmnm) group at the wobble position (U34) of certain tRNAs, forming tRNA-cmnm(5)s(2)U34. The chain is tRNA modification GTPase MnmE from Rhodopseudomonas palustris (strain BisB18).